Consider the following 493-residue polypeptide: E3 ubiquitin-protein ligase TRIM35 (493 aa).

The residue at position 1 (M1) is an N-acetylmethionine. Residues S4 and S8 each carry the phosphoserine modification. The RING-type zinc-finger motif lies at 21–61 (CAVCYDPFRDAVTLRCGHNFCRGCVSRCWEVQVSPTCPVCK). Residues 96-137 (RFSRVCRLHRGQLSLFCLEDKELLCCSCQADPRHQGHRVQPV) form a B box-type zinc finger. Residues C101, H104, C123, and H129 each coordinate Zn(2+). Positions 210 to 251 (AEETRQKQLLADEKMKQLTEETEVLAHEIERLQMEMKEDDVS) form a coiled coil. Residues 284–487 (LGSLQYRVWK…LRICPLHISV (204 aa)) enclose the B30.2/SPRY domain.

The protein belongs to the TRIM/RBCC family. As to quaternary structure, interacts with PKM isoform M2, but not isoform M1; this interaction may compete with that between PKM and FGFR1, and hence reduces FGFR1-dependent tyrosine phosphorylation of PKM. Interacts with IRF7; this interaction promotes IRF7 proteasomal degradation. Interacts with TRAF3; this interaction promotes TRAF3 activation.

Its subcellular location is the cytoplasm. The protein resides in the nucleus. It carries out the reaction S-ubiquitinyl-[E2 ubiquitin-conjugating enzyme]-L-cysteine + [acceptor protein]-L-lysine = [E2 ubiquitin-conjugating enzyme]-L-cysteine + N(6)-ubiquitinyl-[acceptor protein]-L-lysine.. It participates in protein modification; protein ubiquitination. Its function is as follows. E3 ubiquitin-protein ligase that participates in multiple biological processes including cell death, glucose metabolism, and in particular, the innate immune response. Mediates 'Lys-63'-linked polyubiquitination of TRAF3 thereby promoting type I interferon production via RIG-I signaling pathway. Can also catalyze 'Lys-48'-linked polyubiquitination and proteasomal degradation of viral proteins such as influenza virus PB2. Acts as a negative feedback regulator of TLR7- and TLR9-triggered signaling. Mechanistically, promotes the 'Lys-48'-linked ubiquitination of IRF7 and induces its degradation via a proteasome-dependent pathway. Reduces FGFR1-dependent tyrosine phosphorylation of PKM, inhibiting PKM-dependent lactate production, glucose metabolism, and cell growth. The sequence is that of E3 ubiquitin-protein ligase TRIM35 (TRIM35) from Homo sapiens (Human).